Reading from the N-terminus, the 252-residue chain is Chitooligosaccharide deacetylase (252 aa).

The Mg(2+) site is built by histidine 61 and histidine 125.

Belongs to the YdjC deacetylase family. ChbG subfamily. Homodimer. The cofactor is Mg(2+).

The protein localises to the cytoplasm. The catalysed reaction is N,N'-diacetylchitobiose + H2O = N-acetyl-beta-D-glucosaminyl-(1-&gt;4)-D-glucosamine + acetate. It carries out the reaction diacetylchitobiose-6'-phosphate + H2O = N'-monoacetylchitobiose-6'-phosphate + acetate. Its pathway is glycan degradation; chitin degradation. Functionally, involved in the degradation of chitin. ChbG is essential for growth on the acetylated chitooligosaccharides chitobiose and chitotriose but is dispensable for growth on cellobiose and chitosan dimer, the deacetylated form of chitobiose. Deacetylation of chitobiose-6-P and chitotriose-6-P is necessary for both the activation of the chb promoter by the regulatory protein ChbR and the hydrolysis of phosphorylated beta-glucosides by the phospho-beta-glucosidase ChbF. Catalyzes the removal of only one acetyl group from chitobiose-6-P to yield monoacetylchitobiose-6-P, the inducer of ChbR and the substrate of ChbF. In Escherichia coli O6:H1 (strain CFT073 / ATCC 700928 / UPEC), this protein is Chitooligosaccharide deacetylase.